Here is a 207-residue protein sequence, read N- to C-terminus: Thymidylate kinase (207 aa).

12-19 serves as a coordination point for ATP; that stretch reads GVDGAGKS.

It belongs to the thymidylate kinase family.

It carries out the reaction dTMP + ATP = dTDP + ADP. Its function is as follows. Phosphorylation of dTMP to form dTDP in both de novo and salvage pathways of dTTP synthesis. The chain is Thymidylate kinase from Bordetella petrii (strain ATCC BAA-461 / DSM 12804 / CCUG 43448).